Here is a 204-residue protein sequence, read N- to C-terminus: Large ribosomal subunit protein eL15y (204 aa).

The segment at Arg162–Arg204 is disordered. Residues Asn171–Trp192 are compositionally biased toward basic residues. Residues Lys193–Arg204 show a composition bias toward polar residues.

It belongs to the eukaryotic ribosomal protein eL15 family.

This is Large ribosomal subunit protein eL15y (RPL15B) from Arabidopsis thaliana (Mouse-ear cress).